We begin with the raw amino-acid sequence, 191 residues long: Negative modulator of initiation of replication (191 aa).

The tract at residues 96-97 (AV) is interaction with DNA.

It belongs to the SeqA family. Homodimer. Polymerizes to form helical filaments.

The protein resides in the cytoplasm. In terms of biological role, negative regulator of replication initiation, which contributes to regulation of DNA replication and ensures that replication initiation occurs exactly once per chromosome per cell cycle. Binds to pairs of hemimethylated GATC sequences in the oriC region, thus preventing assembly of replication proteins and re-initiation at newly replicated origins. Repression is relieved when the region becomes fully methylated. In Shewanella amazonensis (strain ATCC BAA-1098 / SB2B), this protein is Negative modulator of initiation of replication.